The primary structure comprises 466 residues: Ribulose bisphosphate carboxylase (466 aa).

Asparagine 111 contacts substrate. Catalysis depends on lysine 166, which acts as the Proton acceptor. Substrate is bound at residue lysine 168. Positions 191, 193, and 194 each coordinate Mg(2+). Lysine 191 carries the N6-carboxylysine modification. Residue histidine 287 is the Proton acceptor of the active site. Arginine 288, histidine 321, and serine 368 together coordinate substrate.

The protein belongs to the RuBisCO large chain family. Type II subfamily. As to quaternary structure, homodimer. It depends on Mg(2+) as a cofactor.

The enzyme catalyses 2 (2R)-3-phosphoglycerate + 2 H(+) = D-ribulose 1,5-bisphosphate + CO2 + H2O. The catalysed reaction is D-ribulose 1,5-bisphosphate + O2 = 2-phosphoglycolate + (2R)-3-phosphoglycerate + 2 H(+). Its function is as follows. RuBisCO catalyzes two reactions: the carboxylation of D-ribulose 1,5-bisphosphate, the primary event in carbon dioxide fixation, as well as the oxidative fragmentation of the pentose substrate. Both reactions occur simultaneously and in competition at the same active site. The chain is Ribulose bisphosphate carboxylase (cbbM) from Rhodospirillum rubrum.